The sequence spans 389 residues: Xylose isomerase (389 aa).

Active-site residues include H54 and D57. Mg(2+) is bound by residues E181, E217, H220, D245, D255, D257, and D287.

This sequence belongs to the xylose isomerase family. As to quaternary structure, homotetramer. Mg(2+) is required as a cofactor.

It is found in the cytoplasm. It carries out the reaction alpha-D-xylose = alpha-D-xylulofuranose. Its function is as follows. Involved in D-xylose catabolism. The protein is Xylose isomerase (xylA) of Streptomyces violaceusniger.